Reading from the N-terminus, the 156-residue chain is Oleosin Zm-I (156 aa).

A disordered region spans residues 1–30 (MADHHRGATGGGGGYGDLQRGGGMHGEAQQ). At A2 the chain carries N-acetylalanine. The polar stretch occupies residues 2-42 (ADHHRGATGGGGGYGDLQRGGGMHGEAQQQQKQGAMMTALK). Residues 8 to 25 (ATGGGGGYGDLQRGGGMH) are compositionally biased toward gly residues. The interval 43-114 (AATAATFGGS…AALSVFSWMY (72 aa)) is hydrophobic. 2 helical membrane passes run 51-71 (GSML…LTVA) and 95-115 (GFVT…WMYK).

It belongs to the oleosin family. In terms of processing, the N-terminus is blocked.

It localises to the lipid droplet. The protein localises to the membrane. In terms of biological role, may have a structural role to stabilize the lipid body during desiccation of the seed by preventing coalescence of the oil. Probably interacts with both lipid and phospholipid moieties of lipid bodies. May also provide recognition signals for specific lipase anchorage in lipolysis during seedling growth. This is Oleosin Zm-I (OLE16) from Zea mays (Maize).